Reading from the N-terminus, the 376-residue chain is Transmembrane protein 43 homolog (376 aa).

The Cytoplasmic portion of the chain corresponds to 1 to 10 (MASLSETLRS). Residues 11–31 (HWPIALFGVILFVAGGTELYW) form a helical membrane-spanning segment. Residues 32-277 (NEGRAVHNMM…EVFRLEARAQ (246 aa)) are Lumenal-facing. Residues 278 to 298 (VLHTWWWRFVGWLLIFFGVTC) form a helical membrane-spanning segment. At 299-323 (NTKILRLLFVRVPLLVALAPDPQFP) the chain is on the cytoplasmic side. 2 consecutive transmembrane segments (helical) span residues 324–344 (VTGN…VAWI) and 345–365 (LHRP…YVWF). Residues 366-376 (TRNLVDYHRLD) are Cytoplasmic-facing.

The protein belongs to the TMEM43 family.

Its subcellular location is the endoplasmic reticulum membrane. It localises to the nucleus envelope. Involved in lipid metabolism and utilization. In Drosophila melanogaster (Fruit fly), this protein is Transmembrane protein 43 homolog.